The primary structure comprises 528 residues: DNA primase large subunit (528 aa).

Residues 210–239 (NEEHQRKQYFQQEKFIKLPFENVIELVGNR) form an H-T-H-like motif region. The [4Fe-4S] cluster site is built by Cys336, Cys417, Cys434, and Cys474.

This sequence belongs to the eukaryotic-type primase large subunit family. As to quaternary structure, DNA polymerase alpha:primase is a four subunit enzyme complex, which is assembled throughout the cell cycle, and consists of the two DNA polymerase subunits A POL1 and B POL12, and the DNA primase large PRI2 and small PRI1 subunits. Interacts with MCM10. Requires [4Fe-4S] cluster as cofactor.

Functionally, DNA primase is the polymerase that synthesizes small RNA primers for the Okazaki fragments made during discontinuous DNA replication. In a complex with DNA polymerase alpha (DNA polymerase alpha:primase) constitutes a replicative polymerase. Both primase components participate in formation of the active center, but the ATP-binding site is exclusively located on p48. The protein is DNA primase large subunit (PRI2) of Saccharomyces cerevisiae (strain ATCC 204508 / S288c) (Baker's yeast).